The chain runs to 209 residues: Protein GrpE (209 aa).

Residues 1-18 are compositionally biased toward basic and acidic residues; it reads MKIFNKDGNKNSKEDTKA. The disordered stretch occupies residues 1 to 60; that stretch reads MKIFNKDGNKNSKEDTKAGAENSEAQNSGSSAEEVNKARENPEEASASSEAEKSPEVKCQ. Residues 23 to 33 show a composition bias toward polar residues; the sequence is SEAQNSGSSAE. Residues 50 to 60 show a composition bias toward basic and acidic residues; it reads EAEKSPEVKCQ.

It belongs to the GrpE family. Homodimer.

The protein localises to the cytoplasm. Functionally, participates actively in the response to hyperosmotic and heat shock by preventing the aggregation of stress-denatured proteins, in association with DnaK and GrpE. It is the nucleotide exchange factor for DnaK and may function as a thermosensor. Unfolded proteins bind initially to DnaJ; upon interaction with the DnaJ-bound protein, DnaK hydrolyzes its bound ATP, resulting in the formation of a stable complex. GrpE releases ADP from DnaK; ATP binding to DnaK triggers the release of the substrate protein, thus completing the reaction cycle. Several rounds of ATP-dependent interactions between DnaJ, DnaK and GrpE are required for fully efficient folding. This Methanosarcina barkeri (strain Fusaro / DSM 804) protein is Protein GrpE.